A 563-amino-acid polypeptide reads, in one-letter code: MNTKELIAAEIAKVVPELEQENIQNLLEIPKNADMGDLAFPAFSLAKVLRKAPQMIAADIAEKIDASNFEKVEAVGPYINIFLDKSKISADVLGQVIAQGSHYADQNIGNGRNIAFDMSSPNIAKPFSIGHLRSTVIADALANIVAKQGYKPVRINHLGDWGKQFGMLIVAYKKWGSEEAVKANPINELLQLYVRINAEAEEDPSVDEEAREWFRKLEAGDEEATALWQWFRDESLVEFNRLYDELGVSFDSYNGEAFYNDKMDEVVDILTKKGLLQESQGAQVVNLEKYGIEHPALIKKSDGATLYITRDLAAALYRKRTYDFAKAIYVVGNEQSAHFKQLKAVLKEMGYNWSDDMTHVAFGLVTKNGKKLSTRKGNVILLEPTIAEAVNRAQAQIEAKNPNLPNKEAIAHAVGVGAIKFYDLKTDRMNGYDFDLDAMVSFEGETGPYVQYAHARIQSILRKADFTPSADATYSLNDVESWEIIKLLQDFPRIINRASDNFEPSIVAKFAISLAQAFNKYYAHTRILDESPERDSRLALCYATATVLKEALRLLGVEAPDEM.

The short motif at 121–131 (PNIAKPFSIGH) is the 'HIGH' region element.

The protein belongs to the class-I aminoacyl-tRNA synthetase family. In terms of assembly, monomer.

The protein localises to the cytoplasm. The catalysed reaction is tRNA(Arg) + L-arginine + ATP = L-arginyl-tRNA(Arg) + AMP + diphosphate. This Streptococcus thermophilus (strain ATCC BAA-250 / LMG 18311) protein is Arginine--tRNA ligase.